We begin with the raw amino-acid sequence, 143 residues long: uncharacterized protein (143 aa).

Cysteine 12 is an active-site residue.

It belongs to the ArsC family.

This is an uncharacterized protein from Rhodospirillum rubrum.